A 157-amino-acid polypeptide reads, in one-letter code: MADEQQQVFQLQRIYLKDTSFECPGAPEVFLQEWKPKVNVQLNNSARRVGEGDEFEVEITVTVTAKDEAEEKTFYLVEVKQAGIFTVKGIDGEERAQLLGAYCPNLLFPYVREVVSDLVAKGSFPQMVLQPINFDALYQQQRDQQQGNAAAAGETVQ.

It belongs to the SecB family. In terms of assembly, homotetramer, a dimer of dimers. One homotetramer interacts with 1 SecA dimer.

It is found in the cytoplasm. One of the proteins required for the normal export of preproteins out of the cell cytoplasm. It is a molecular chaperone that binds to a subset of precursor proteins, maintaining them in a translocation-competent state. It also specifically binds to its receptor SecA. This Alcanivorax borkumensis (strain ATCC 700651 / DSM 11573 / NCIMB 13689 / SK2) protein is Protein-export protein SecB.